Reading from the N-terminus, the 211-residue chain is Large ribosomal subunit protein eL13 (211 aa).

An N6-acetyllysine modification is found at Lys-16. Residues Ser-52, Ser-77, and Ser-106 each carry the phosphoserine modification. Glycyl lysine isopeptide (Lys-Gly) (interchain with G-Cter in SUMO2) cross-links involve residues Lys-123 and Lys-145. Lys-174 is covalently cross-linked (Glycyl lysine isopeptide (Lys-Gly) (interchain with G-Cter in SUMO1); alternate). Residues Lys-174 and Lys-177 each participate in a glycyl lysine isopeptide (Lys-Gly) (interchain with G-Cter in SUMO2); alternate cross-link. N6-acetyllysine; alternate is present on Lys-177.

The protein belongs to the eukaryotic ribosomal protein eL13 family. Component of the 60S large ribosomal subunit (LSU).

It localises to the cytoplasm. Functionally, component of the ribosome, a large ribonucleoprotein complex responsible for the synthesis of proteins in the cell. The small ribosomal subunit (SSU) binds messenger RNAs (mRNAs) and translates the encoded message by selecting cognate aminoacyl-transfer RNA (tRNA) molecules. The large subunit (LSU) contains the ribosomal catalytic site termed the peptidyl transferase center (PTC), which catalyzes the formation of peptide bonds, thereby polymerizing the amino acids delivered by tRNAs into a polypeptide chain. The nascent polypeptides leave the ribosome through a tunnel in the LSU and interact with protein factors that function in enzymatic processing, targeting, and the membrane insertion of nascent chains at the exit of the ribosomal tunnel. As part of the LSU, it is probably required for its formation and the maturation of rRNAs. Plays a role in bone development. In Rattus norvegicus (Rat), this protein is Large ribosomal subunit protein eL13 (Rpl13).